The chain runs to 521 residues: Colicin-E1* (521 aa).

Disordered regions lie at residues Asn-26–His-52 and Ser-127–Gln-163. Positions Asp-30–Gly-42 are enriched in gly residues. Over residues Lys-133–Ala-145 the composition is skewed to basic residues. Residues Glu-146–Gln-163 are compositionally biased toward basic and acidic residues. A run of 2 helical transmembrane segments spans residues Ala-470 to Leu-486 and Ile-493 to Lys-509.

It belongs to the channel forming colicin family.

It is found in the cell membrane. This colicin is a channel-forming colicin. This class of transmembrane toxins depolarize the cytoplasmic membrane, leading to dissipation of cellular energy. Functionally, colicins are polypeptide toxins produced by and active against E.coli and closely related bacteria. This chain is Colicin-E1* (cea), found in Shigella sonnei.